The primary structure comprises 155 residues: SsrA-binding protein (155 aa).

The interval 135–155 is disordered; that stretch reads KRESLKRRQDQRDIQRAMKNY.

The protein belongs to the SmpB family.

The protein resides in the cytoplasm. Required for rescue of stalled ribosomes mediated by trans-translation. Binds to transfer-messenger RNA (tmRNA), required for stable association of tmRNA with ribosomes. tmRNA and SmpB together mimic tRNA shape, replacing the anticodon stem-loop with SmpB. tmRNA is encoded by the ssrA gene; the 2 termini fold to resemble tRNA(Ala) and it encodes a 'tag peptide', a short internal open reading frame. During trans-translation Ala-aminoacylated tmRNA acts like a tRNA, entering the A-site of stalled ribosomes, displacing the stalled mRNA. The ribosome then switches to translate the ORF on the tmRNA; the nascent peptide is terminated with the 'tag peptide' encoded by the tmRNA and targeted for degradation. The ribosome is freed to recommence translation, which seems to be the essential function of trans-translation. This is SsrA-binding protein from Trichormus variabilis (strain ATCC 29413 / PCC 7937) (Anabaena variabilis).